Consider the following 222-residue polypeptide: Putative thymidylate synthase (222 aa).

Cys146 is a catalytic residue.

It belongs to the thymidylate synthase family. Archaeal-type ThyA subfamily. In terms of assembly, monomer.

The protein resides in the cytoplasm. The protein operates within pyrimidine metabolism; dTTP biosynthesis. Its function is as follows. May catalyze the biosynthesis of dTMP using an unknown cosubstrate. The sequence is that of Putative thymidylate synthase from Methanothermobacter thermautotrophicus (strain ATCC 29096 / DSM 1053 / JCM 10044 / NBRC 100330 / Delta H) (Methanobacterium thermoautotrophicum).